The sequence spans 562 residues: O-fucosyltransferase 4 (562 aa).

Residues Ser10–Gln46 are disordered. Residues Lys37–Gln46 show a composition bias toward low complexity. The chain crosses the membrane as a helical; Signal-anchor for type II membrane protein span at residues Gly67–Ala87. Asn122, Asn146, Asn185, and Asn239 each carry an N-linked (GlcNAc...) asparagine glycan. Residue His332 to Arg334 coordinates substrate. N-linked (GlcNAc...) asparagine glycosylation is found at Asn404, Asn420, Asn450, and Asn555.

This sequence belongs to the glycosyltransferase GT106 family.

It localises to the membrane. It participates in glycan metabolism. In Arabidopsis thaliana (Mouse-ear cress), this protein is O-fucosyltransferase 4.